Here is a 420-residue protein sequence, read N- to C-terminus: ATP phosphoribosyltransferase regulatory subunit (420 aa).

Belongs to the class-II aminoacyl-tRNA synthetase family. HisZ subfamily. In terms of assembly, heteromultimer composed of HisG and HisZ subunits.

It is found in the cytoplasm. The protein operates within amino-acid biosynthesis; L-histidine biosynthesis; L-histidine from 5-phospho-alpha-D-ribose 1-diphosphate: step 1/9. Functionally, required for the first step of histidine biosynthesis. May allow the feedback regulation of ATP phosphoribosyltransferase activity by histidine. This chain is ATP phosphoribosyltransferase regulatory subunit, found in Bacillus cereus (strain AH187).